Reading from the N-terminus, the 189-residue chain is Adenine phosphoribosyltransferase (189 aa).

This sequence belongs to the purine/pyrimidine phosphoribosyltransferase family. In terms of assembly, homodimer.

It localises to the cytoplasm. The enzyme catalyses AMP + diphosphate = 5-phospho-alpha-D-ribose 1-diphosphate + adenine. Its pathway is purine metabolism; AMP biosynthesis via salvage pathway; AMP from adenine: step 1/1. Functionally, catalyzes a salvage reaction resulting in the formation of AMP, that is energically less costly than de novo synthesis. This Frankia alni (strain DSM 45986 / CECT 9034 / ACN14a) protein is Adenine phosphoribosyltransferase.